We begin with the raw amino-acid sequence, 525 residues long: Peptide chain release factor 3 (525 aa).

Residues 9-276 (AKRRTFAIIS…GFTRYAPAPQ (268 aa)) form the tr-type G domain. Residues 18 to 25 (SHPDAGKT), 86 to 90 (DTPGH), and 140 to 143 (NKFD) contribute to the GTP site.

It belongs to the TRAFAC class translation factor GTPase superfamily. Classic translation factor GTPase family. PrfC subfamily.

The protein resides in the cytoplasm. Increases the formation of ribosomal termination complexes and stimulates activities of RF-1 and RF-2. It binds guanine nucleotides and has strong preference for UGA stop codons. It may interact directly with the ribosome. The stimulation of RF-1 and RF-2 is significantly reduced by GTP and GDP, but not by GMP. The protein is Peptide chain release factor 3 of Francisella tularensis subsp. mediasiatica (strain FSC147).